Consider the following 433-residue polypeptide: Adenosylhomocysteinase A (433 aa).

Residues Thr57, Asp132, Glu157, Lys187, and Asp191 each contribute to the substrate site. The NAD binding stretch occupies residues 184–351 (SVTKSKFDNL…EGRLVNLGCA (168 aa)).

This sequence belongs to the adenosylhomocysteinase family. As to quaternary structure, homotetramer. NAD(+) is required as a cofactor.

The protein resides in the cytoplasm. It catalyses the reaction S-adenosyl-L-homocysteine + H2O = L-homocysteine + adenosine. It functions in the pathway amino-acid biosynthesis; L-homocysteine biosynthesis; L-homocysteine from S-adenosyl-L-homocysteine: step 1/1. Catalyzes the hydrolysis of S-adenosyl-L-homocysteine to form adenosine and homocysteine. Binds copper ions. The polypeptide is Adenosylhomocysteinase A (ahcy-a) (Xenopus laevis (African clawed frog)).